We begin with the raw amino-acid sequence, 453 residues long: Ribosomal protein uS12 methylthiotransferase RimO (453 aa).

One can recognise an MTTase N-terminal domain in the interval 5–120 (PKVGFVSLGC…VMQAVHSHLP (116 aa)). C14, C50, C79, C151, C155, and C158 together coordinate [4Fe-4S] cluster. One can recognise a Radical SAM core domain in the interval 137 to 382 (LTPRHYAYLK…MEVAEEVSAQ (246 aa)). Residues 385-453 (QRKVGKTLKV…ADGHDLWGEV (69 aa)) form the TRAM domain.

Belongs to the methylthiotransferase family. RimO subfamily. It depends on [4Fe-4S] cluster as a cofactor.

The protein resides in the cytoplasm. It carries out the reaction L-aspartate(89)-[ribosomal protein uS12]-hydrogen + (sulfur carrier)-SH + AH2 + 2 S-adenosyl-L-methionine = 3-methylsulfanyl-L-aspartate(89)-[ribosomal protein uS12]-hydrogen + (sulfur carrier)-H + 5'-deoxyadenosine + L-methionine + A + S-adenosyl-L-homocysteine + 2 H(+). In terms of biological role, catalyzes the methylthiolation of an aspartic acid residue of ribosomal protein uS12. The sequence is that of Ribosomal protein uS12 methylthiotransferase RimO from Burkholderia ambifaria (strain ATCC BAA-244 / DSM 16087 / CCUG 44356 / LMG 19182 / AMMD) (Burkholderia cepacia (strain AMMD)).